The primary structure comprises 291 residues: ATP synthase gamma chain (291 aa).

It belongs to the ATPase gamma chain family. F-type ATPases have 2 components, CF(1) - the catalytic core - and CF(0) - the membrane proton channel. CF(1) has five subunits: alpha(3), beta(3), gamma(1), delta(1), epsilon(1). CF(0) has three main subunits: a, b and c.

Its subcellular location is the cell membrane. Produces ATP from ADP in the presence of a proton gradient across the membrane. The gamma chain is believed to be important in regulating ATPase activity and the flow of protons through the CF(0) complex. The polypeptide is ATP synthase gamma chain (Streptococcus equinus (Streptococcus bovis)).